Here is a 158-residue protein sequence, read N- to C-terminus: Transcription elongation factor GreA (158 aa).

A coiled-coil region spans residues 4–75 (EKTYPMTQEG…TQLENMIRNA (72 aa)).

It belongs to the GreA/GreB family.

In terms of biological role, necessary for efficient RNA polymerase transcription elongation past template-encoded arresting sites. The arresting sites in DNA have the property of trapping a certain fraction of elongating RNA polymerases that pass through, resulting in locked ternary complexes. Cleavage of the nascent transcript by cleavage factors such as GreA or GreB allows the resumption of elongation from the new 3'terminus. GreA releases sequences of 2 to 3 nucleotides. The protein is Transcription elongation factor GreA of Bacillus anthracis (strain A0248).